Here is a 59-residue protein sequence, read N- to C-terminus: Alpha-conotoxin CIA (59 aa).

Residues 1-16 form the signal peptide; it reads MFTVFLLVVLTITVVS. A propeptide spanning residues 17 to 42 is cleaved from the precursor; it reads FPSDRASDGRDDEAKDERSDMYKSKR. Cystine bridges form between Cys-46/Cys-51 and Cys-47/Cys-57. Residue Cys-57 is modified to Cysteine amide.

It belongs to the conotoxin A superfamily. Expressed by the venom duct.

The protein localises to the secreted. In terms of biological role, alpha-conotoxins act on postsynaptic membranes, they bind to the nicotinic acetylcholine receptors (nAChR) and thus inhibit them. This toxin blocks the rat muscle nAChRs alpha-1-beta-1-gamma-delta (CHRNA1-CHRNB1-CHRNG-CHRND) (IC(50)=5.7 nM) and the rat neuronal nAChR alpha-3-beta-2/CHRNA3-CHRNB2 (IC(50)=2060 nM). In vivo, intramuscular injection into zebrafish produces rapid flaccid paralysis. The protein is Alpha-conotoxin CIA of Conus catus (Cat cone).